We begin with the raw amino-acid sequence, 421 residues long: Gamma-glutamyl phosphate reductase (421 aa).

This sequence belongs to the gamma-glutamyl phosphate reductase family.

The protein localises to the cytoplasm. The catalysed reaction is L-glutamate 5-semialdehyde + phosphate + NADP(+) = L-glutamyl 5-phosphate + NADPH + H(+). The protein operates within amino-acid biosynthesis; L-proline biosynthesis; L-glutamate 5-semialdehyde from L-glutamate: step 2/2. Functionally, catalyzes the NADPH-dependent reduction of L-glutamate 5-phosphate into L-glutamate 5-semialdehyde and phosphate. The product spontaneously undergoes cyclization to form 1-pyrroline-5-carboxylate. This chain is Gamma-glutamyl phosphate reductase, found in Roseobacter denitrificans (strain ATCC 33942 / OCh 114) (Erythrobacter sp. (strain OCh 114)).